Consider the following 572-residue polypeptide: Proline--tRNA ligase (572 aa).

Belongs to the class-II aminoacyl-tRNA synthetase family. ProS type 1 subfamily. As to quaternary structure, homodimer.

The protein localises to the cytoplasm. It catalyses the reaction tRNA(Pro) + L-proline + ATP = L-prolyl-tRNA(Pro) + AMP + diphosphate. Functionally, catalyzes the attachment of proline to tRNA(Pro) in a two-step reaction: proline is first activated by ATP to form Pro-AMP and then transferred to the acceptor end of tRNA(Pro). As ProRS can inadvertently accommodate and process non-cognate amino acids such as alanine and cysteine, to avoid such errors it has two additional distinct editing activities against alanine. One activity is designated as 'pretransfer' editing and involves the tRNA(Pro)-independent hydrolysis of activated Ala-AMP. The other activity is designated 'posttransfer' editing and involves deacylation of mischarged Ala-tRNA(Pro). The misacylated Cys-tRNA(Pro) is not edited by ProRS. The protein is Proline--tRNA ligase of Escherichia coli O7:K1 (strain IAI39 / ExPEC).